The primary structure comprises 219 residues: Thiamine-phosphate synthase (219 aa).

4-amino-2-methyl-5-(diphosphooxymethyl)pyrimidine contacts are provided by residues 44 to 48 and Asn-79; that span reads QFREK. The Mg(2+) site is built by Asp-80 and Asp-99. Ser-117 contacts 4-amino-2-methyl-5-(diphosphooxymethyl)pyrimidine. 143–145 lines the 2-[(2R,5Z)-2-carboxy-4-methylthiazol-5(2H)-ylidene]ethyl phosphate pocket; that stretch reads TST. A 4-amino-2-methyl-5-(diphosphooxymethyl)pyrimidine-binding site is contributed by Lys-146. 2-[(2R,5Z)-2-carboxy-4-methylthiazol-5(2H)-ylidene]ethyl phosphate is bound by residues Gly-175 and 195–196; that span reads IS.

This sequence belongs to the thiamine-phosphate synthase family. Mg(2+) serves as cofactor.

It catalyses the reaction 2-[(2R,5Z)-2-carboxy-4-methylthiazol-5(2H)-ylidene]ethyl phosphate + 4-amino-2-methyl-5-(diphosphooxymethyl)pyrimidine + 2 H(+) = thiamine phosphate + CO2 + diphosphate. The enzyme catalyses 2-(2-carboxy-4-methylthiazol-5-yl)ethyl phosphate + 4-amino-2-methyl-5-(diphosphooxymethyl)pyrimidine + 2 H(+) = thiamine phosphate + CO2 + diphosphate. The catalysed reaction is 4-methyl-5-(2-phosphooxyethyl)-thiazole + 4-amino-2-methyl-5-(diphosphooxymethyl)pyrimidine + H(+) = thiamine phosphate + diphosphate. The protein operates within cofactor biosynthesis; thiamine diphosphate biosynthesis; thiamine phosphate from 4-amino-2-methyl-5-diphosphomethylpyrimidine and 4-methyl-5-(2-phosphoethyl)-thiazole: step 1/1. Condenses 4-methyl-5-(beta-hydroxyethyl)thiazole monophosphate (THZ-P) and 2-methyl-4-amino-5-hydroxymethyl pyrimidine pyrophosphate (HMP-PP) to form thiamine monophosphate (TMP). The chain is Thiamine-phosphate synthase from Bacillus cereus (strain ZK / E33L).